We begin with the raw amino-acid sequence, 57 residues long: Defensin-like protein 302 (57 aa).

3 cysteine pairs are disulfide-bonded: C19/C39, C26/C44, and C32/C46.

The protein belongs to the DEFL family.

The sequence is that of Defensin-like protein 302 from Arabidopsis thaliana (Mouse-ear cress).